The primary structure comprises 421 residues: 3-isopropylmalate dehydratase large subunit (421 aa).

Cysteine 292, cysteine 352, and cysteine 355 together coordinate [4Fe-4S] cluster.

The protein belongs to the aconitase/IPM isomerase family. LeuC type 2 subfamily. Heterodimer of LeuC and LeuD. The cofactor is [4Fe-4S] cluster.

The enzyme catalyses (2R,3S)-3-isopropylmalate = (2S)-2-isopropylmalate. The protein operates within amino-acid biosynthesis; L-leucine biosynthesis; L-leucine from 3-methyl-2-oxobutanoate: step 2/4. Catalyzes the isomerization between 2-isopropylmalate and 3-isopropylmalate, via the formation of 2-isopropylmaleate. The sequence is that of 3-isopropylmalate dehydratase large subunit from Herpetosiphon aurantiacus (strain ATCC 23779 / DSM 785 / 114-95).